The sequence spans 153 residues: Interleukin-2 (153 aa).

The N-terminal stretch at 1–20 (MYRMQLLSCIALSLALVTNS) is a signal peptide. The O-linked (GalNAc...) threonine glycan is linked to T23. A disulfide bridge links C78 with C125.

The protein belongs to the IL-2 family.

The protein resides in the secreted. Cytokine produced by activated CD4-positive helper T-cells and to a lesser extend activated CD8-positive T-cells and natural killer (NK) cells that plays pivotal roles in the immune response and tolerance. Binds to a receptor complex composed of either the high-affinity trimeric IL-2R (IL2RA/CD25, IL2RB/CD122 and IL2RG/CD132) or the low-affinity dimeric IL-2R (IL2RB and IL2RG). Interaction with the receptor leads to oligomerization and conformation changes in the IL-2R subunits resulting in downstream signaling starting with phosphorylation of JAK1 and JAK3. In turn, JAK1 and JAK3 phosphorylate the receptor to form a docking site leading to the phosphorylation of several substrates including STAT5. This process leads to activation of several pathways including STAT, phosphoinositide-3-kinase/PI3K and mitogen-activated protein kinase/MAPK pathways. Functions as a T-cell growth factor and can increase NK-cell cytolytic activity as well. Promotes strong proliferation of activated B-cells and subsequently immunoglobulin production. Plays a pivotal role in regulating the adaptive immune system by controlling the survival and proliferation of regulatory T-cells, which are required for the maintenance of immune tolerance. Moreover, participates in the differentiation and homeostasis of effector T-cell subsets, including Th1, Th2, Th17 as well as memory CD8-positive T-cells. This chain is Interleukin-2 (IL2), found in Homo sapiens (Human).